Reading from the N-terminus, the 1019-residue chain is Photoactivated adenylate cyclase subunit alpha-like protein FB (1019 aa).

Residues 55–148 (LRRLMYLSAS…GRLYGEWHMK (94 aa)) form the BLUF 1 domain. Residues 204–332 (VVTFIYLVEF…DCINTASRIT (129 aa)) enclose the Guanylate cyclase 1 domain. One can recognise a BLUF 2 domain in the interval 467 to 559 (LITLTYISQA…REYGSPLDMT (93 aa)). The region spanning 615-744 (VLLATDICSF…EVSARVMEVV (130 aa)) is the Guanylate cyclase 2 domain. The span at 825–839 (APGRGAPAGGIPSSP) shows a compositional bias: low complexity. Positions 825-862 (APGRGAPAGGIPSSPKVRPPGRTNSVSSYTPDPNEALD) are disordered. The segment covering 846–855 (RTNSVSSYTP) has biased composition (polar residues).

This sequence belongs to the adenylyl cyclase class-4/guanylyl cyclase family. Heterotetramer of two alpha and two beta subunits.

The protein resides in the cell projection. It localises to the cilium. It is found in the flagellum. The protein is Photoactivated adenylate cyclase subunit alpha-like protein FB of Euglena gracilis.